A 604-amino-acid polypeptide reads, in one-letter code: Complement factor I (604 aa).

An N-terminal signal peptide occupies residues 1–18; that stretch reads MKLALLILLLLNPHLSSS. 20 disulfides stabilise this stretch: Cys36–Cys260, Cys46–Cys57, Cys51–Cys62, Cys64–Cys96, Cys70–Cys89, Cys78–Cys109, Cys144–Cys186, Cys157–Cys219, Cys191–Cys201, Cys234–Cys252, Cys246–Cys261, Cys264–Cys276, Cys271–Cys289, Cys283–Cys298, Cys349–Cys474, Cys387–Cys403, Cys395–Cys465, Cys488–Cys552, Cys516–Cys531, and Cys542–Cys571. Asn40 is a glycosylation site (N-linked (GlcNAc...) asparagine). A Kazal-like domain is found at 58-111; that stretch reads IEGTCACKLPYQCPKAGTPVCATNGRGYPTYCHLKSFECLHPEIKFSNNGTCTA. Asn106, Asn116, and Asn182 each carry an N-linked (GlcNAc...) asparagine glycan. Residues 117–217 enclose the SRCR domain; the sequence is VSLIYGSTDT…SKAPHGLAGV (101 aa). 2 LDL-receptor class A domains span residues 218-262 and 263-299; these read VCYT…LCCK and GCRGQAFLCKSGVCIPNQRKCNGEVDCITGEDESGCE. 6 residues coordinate Ca(2+): Lys244, Asp247, Val249, Asp251, Asp257, and Glu258. Residues Asn284, Glu286, Asp288, Asp294, and Glu295 each contribute to the Ca(2+) site. Positions 362 to 595 constitute a Peptidase S1 domain; the sequence is VVGGKPAEMG…YFDWISYYVG (234 aa). Catalysis depends on charge relay system residues His402 and Asp450. Residue Asn515 is glycosylated (N-linked (GlcNAc...) asparagine). Catalysis depends on Ser546, which acts as the Charge relay system. Asn557 is a glycosylation site (N-linked (GlcNAc...) asparagine).

The protein belongs to the peptidase S1 family. Heterodimer of a light and heavy chains; disulfide-linked. The fully processed and mature protein circulates as a zymogen, and is allosterically activated by substrate-induced remodeling of the active site. Interacts with C3b. Interacts with complement factor H. Expressed in the liver by hepatocytes. Also present in other cells such as monocytes, fibroblasts or keratinocytes.

Its subcellular location is the secreted. It localises to the extracellular space. The enzyme catalyses Inactivates complement subcomponents C3b, iC3b and C4b by proteolytic cleavage.. Functionally, trypsin-like serine protease that plays an essential role in regulating the immune response by controlling all complement pathways. Inhibits these pathways by cleaving three peptide bonds in the alpha-chain of C3b and two bonds in the alpha-chain of C4b thereby inactivating these proteins. Essential cofactors for these reactions include factor H and C4BP in the fluid phase and membrane cofactor protein/CD46 and CR1 on cell surfaces. The presence of these cofactors on healthy cells allows degradation of deposited C3b by CFI in order to prevent undesired complement activation, while in apoptotic cells or microbes, the absence of such cofactors leads to C3b-mediated complement activation and subsequent opsonization. This Rattus norvegicus (Rat) protein is Complement factor I (Cfi).